The chain runs to 837 residues: PE-PGRS family protein PE_PGRS4 (837 aa).

In terms of domain architecture, PE spans 4–94; the sequence is VIAAPEVIAA…GAYAAAEAAA (91 aa). Positions 811–825 are enriched in gly residues; that stretch reads NGGKAGGTPGAGGTS. A disordered region spans residues 811-837; sequence NGGKAGGTPGAGGTSGLIIGENGLNGL. Low complexity predominate over residues 826–837; the sequence is GLIIGENGLNGL.

It belongs to the mycobacterial PE family. PGRS subfamily.

The protein is PE-PGRS family protein PE_PGRS4 of Mycobacterium tuberculosis (strain ATCC 25618 / H37Rv).